Consider the following 399-residue polypeptide: Fructose-1,6-bisphosphate aldolase/phosphatase (399 aa).

Residue D11 is the Proton acceptor; for FBP phosphatase activity of the active site. Mg(2+) contacts are provided by D11, H18, D52, and D53. H18 provides a ligand contact to beta-D-fructose 1,6-bisphosphate. H18 is a binding site for dihydroxyacetone phosphate. Y91 is a beta-D-fructose 1,6-bisphosphate binding site. Q95 is a binding site for Mg(2+). 104-105 contributes to the beta-D-fructose 1,6-bisphosphate binding site; that stretch reads GN. Residue D132 participates in Mg(2+) binding. Position 133 (K133) interacts with beta-D-fructose 1,6-bisphosphate. K133 serves as a coordination point for dihydroxyacetone phosphate. The Proton donor/acceptor; for FBP aldolase activity role is filled by Y229. Residues K232, D233, and D234 each contribute to the Mg(2+) site. Residue K232 is the Schiff-base intermediate with DHAP; for FBP aldolase activity of the active site. Beta-D-fructose 1,6-bisphosphate is bound by residues 242–243, R266, D297, and Y358; that span reads QS. The dihydroxyacetone phosphate site is built by R266 and D297.

It belongs to the FBP aldolase/phosphatase family. As to quaternary structure, homooctamer; dimer of tetramers. Mg(2+) serves as cofactor.

It carries out the reaction beta-D-fructose 1,6-bisphosphate + H2O = beta-D-fructose 6-phosphate + phosphate. The enzyme catalyses beta-D-fructose 1,6-bisphosphate = D-glyceraldehyde 3-phosphate + dihydroxyacetone phosphate. It participates in carbohydrate biosynthesis; gluconeogenesis. In terms of biological role, catalyzes two subsequent steps in gluconeogenesis: the aldol condensation of dihydroxyacetone phosphate (DHAP) and glyceraldehyde-3-phosphate (GA3P) to fructose-1,6-bisphosphate (FBP), and the dephosphorylation of FBP to fructose-6-phosphate (F6P). This is Fructose-1,6-bisphosphate aldolase/phosphatase from Pyrobaculum neutrophilum (strain DSM 2338 / JCM 9278 / NBRC 100436 / V24Sta) (Thermoproteus neutrophilus).